We begin with the raw amino-acid sequence, 1538 residues long: Phenolphthiocerol/phthiocerol polyketide synthase subunit B (1538 aa).

A Ketosynthase family 3 (KS3) domain is found at 33–455; sequence AEPVAVVGIG…GTNAHVIIEQ (423 aa). Catalysis depends on for beta-ketoacyl synthase activity residues cysteine 205, histidine 340, and histidine 377. An acyltransferase region spans residues 553–882; sequence DGSPGPGTVF…TNLYTADIAH (330 aa). Serine 649 (for malonyltransferase activity) is an active-site residue. Residue 1153–1196 participates in NADP(+) binding; sequence SQLVIGATGNIGPHLIRQLARMGAKTIVAMARKPGALDELTQCL. A beta-ketoacyl reductase region spans residues 1153-1328; that stretch reads SQLVIGATGN…TVVDWGLWKS (176 aa). The region spanning 1423-1498 is the Carrier domain; the sequence is DMLFDHVGAL…SLTDYLATVL (76 aa). Position 1458 is an O-(pantetheine 4'-phosphoryl)serine (serine 1458).

The cofactor is NADP(+). Pantetheine 4'-phosphate is required as a cofactor.

It carries out the reaction icosanoyl-[(phenol)carboxyphthiodiolenone synthase] + 2 (S)-methylmalonyl-CoA + 3 malonyl-CoA + 5 NADPH + 10 H(+) = C32-carboxyphthiodiolenone-[(phenol)carboxyphthiodiolenone synthase] + 5 CO2 + 5 NADP(+) + 5 CoA + 2 H2O. It catalyses the reaction docosanoyl-[(phenol)carboxyphthiodiolenone synthase] + 2 (S)-methylmalonyl-CoA + 3 malonyl-CoA + 5 NADPH + 10 H(+) = C34-carboxyphthiodiolenone-[(phenol)carboxyphthiodiolenone synthase] + 5 CO2 + 5 NADP(+) + 5 CoA + 2 H2O. The enzyme catalyses 17-(4-hydroxyphenyl)heptadecanoyl-[(phenol)carboxyphthiodiolenone synthase] + 2 (S)-methylmalonyl-CoA + 3 malonyl-CoA + 5 NADPH + 10 H(+) = C35-(phenol)carboxyphthiodiolenone-[(phenol)carboxyphthiodiolenone synthase] + 5 CO2 + 5 NADP(+) + 5 CoA + 2 H2O. The catalysed reaction is 19-(4-hydroxyphenyl)nonadecanoyl-[(phenol)carboxyphthiodiolenone synthase] + 2 (S)-methylmalonyl-CoA + 3 malonyl-CoA + 5 NADPH + 10 H(+) = C37-(phenol)carboxyphthiodiolenone-[(phenol)carboxyphthiodiolenone synthase] + 5 CO2 + 5 NADP(+) + 5 CoA + 2 H2O. The protein operates within lipid metabolism; fatty acid biosynthesis. Its function is as follows. Part of the PpsABCDE complex involved in the biosynthesis of the lipid core common to phthiocerols and phenolphthiocerols by successive additions of malonyl-CoA or methylmalonyl-CoA extender units. PpsA can accept as substrate the activated forms of either icosanoyl (C20), docosanoyl (C22) or lignoceroyl (C24) groups from FadD26, or a (4-hydroxyphenyl)-C17 or (4-hydroxyphenyl)-C19 fatty acyl from FadD29. PpsA initiates the biosynthesis and extends its substrate using a malonyl-CoA extender unit. The PpsB and PpsC proteins add the second and third malonyl-CoA extender units. PpsD adds an (R)-methylmalonyl unit and PpsE adds a second (R)-methylmalonyl unit. The incorporation of the methylmalonyl units results in formation of two branched methyl groups in the elongated product. The protein is Phenolphthiocerol/phthiocerol polyketide synthase subunit B (ppsB) of Mycobacterium bovis (strain ATCC BAA-935 / AF2122/97).